The primary structure comprises 250 residues: 5'-nucleotidase SurE (250 aa).

Aspartate 8, aspartate 9, serine 39, and asparagine 95 together coordinate a divalent metal cation.

Belongs to the SurE nucleotidase family. A divalent metal cation is required as a cofactor.

The protein localises to the cytoplasm. It carries out the reaction a ribonucleoside 5'-phosphate + H2O = a ribonucleoside + phosphate. Its function is as follows. Nucleotidase that shows phosphatase activity on nucleoside 5'-monophosphates. The polypeptide is 5'-nucleotidase SurE (Cupriavidus taiwanensis (strain DSM 17343 / BCRC 17206 / CCUG 44338 / CIP 107171 / LMG 19424 / R1) (Ralstonia taiwanensis (strain LMG 19424))).